Reading from the N-terminus, the 470-residue chain is Probable citrate synthase, mitochondrial (470 aa).

Active-site residues include His-297, His-351, and Asp-406.

It belongs to the citrate synthase family. Homodimer.

Its subcellular location is the mitochondrion matrix. It carries out the reaction oxaloacetate + acetyl-CoA + H2O = citrate + CoA + H(+). It participates in carbohydrate metabolism; tricarboxylic acid cycle; isocitrate from oxaloacetate: step 1/2. The protein is Probable citrate synthase, mitochondrial of Leishmania braziliensis.